The primary structure comprises 331 residues: Cytoskeleton protein RodZ (331 aa).

The Cytoplasmic segment spans residues 1-111 (MNTEATQDHQ…LGKRRKKRDG (111 aa)). In terms of domain architecture, HTH cro/C1-type spans 19-71 (LRHAREQLGLSQQAVAERLCLKVSTVRDIEDDKAPADLASTFLRGYIRSYARL). The H-T-H motif DNA-binding region spans 30 to 49 (QQAVAERLCLKVSTVRDIED). A helical; Signal-anchor for type II membrane protein transmembrane segment spans residues 112–132 (WLMSFTWLVLFVVIGLSGAWW). Residues 133–331 (WQDHKAQQEE…TLNAESSPAQ (199 aa)) lie on the Periplasmic side of the membrane. Positions 146–166 (MADQSSAELNGGDANSQNVPL) are enriched in polar residues. The segment at 146–238 (MADQSSAELN…ASPLPTDQAN (93 aa)) is disordered. 2 stretches are compositionally biased toward low complexity: residues 167–202 (DTSAPAAPTADSAANSAPTDTASAPTTSAPAQTPAD) and 216–234 (TAGTTPAAPATTPASPLPT).

This sequence belongs to the RodZ family.

It localises to the cell inner membrane. Its function is as follows. Cytoskeletal protein that is involved in cell-shape control through regulation of the length of the long axis. The polypeptide is Cytoskeleton protein RodZ (Klebsiella pneumoniae subsp. pneumoniae (strain ATCC 700721 / MGH 78578)).